Reading from the N-terminus, the 291-residue chain is MNAVTSANNNTDNRRLRLDVVSIFPEYLDPLRHALLGKAIEDGYLEVGVHDLRDWATGGHKAVDDTPYGGGPGMVMKPEVWGPALDDVAAGRVAGWELESATPHRNVARHDELAGVDKHAYEGEDADLPLLLVPTPAGKPFTQADAQAWSNENHIVFACGRYEGIDQRVIEDARNRYRVREVSIGDYVLIGGEVAVLVIAEAVVRLIPGVLGNRRSHEEDSFSDGLLEGPSYTKPRTWRGLDVPEVLFSGNHARVDRWRRDQALLRTQRVRPELLDAVELTTEDRKVLGLD.

S-adenosyl-L-methionine is bound by residues Gly160 and 184–189; that span reads IGDYVL.

This sequence belongs to the RNA methyltransferase TrmD family. In terms of assembly, homodimer.

The protein localises to the cytoplasm. The enzyme catalyses guanosine(37) in tRNA + S-adenosyl-L-methionine = N(1)-methylguanosine(37) in tRNA + S-adenosyl-L-homocysteine + H(+). Its function is as follows. Specifically methylates guanosine-37 in various tRNAs. The protein is tRNA (guanine-N(1)-)-methyltransferase of Corynebacterium efficiens (strain DSM 44549 / YS-314 / AJ 12310 / JCM 11189 / NBRC 100395).